The sequence spans 518 residues: GMP synthase [glutamine-hydrolyzing] (518 aa).

The Glutamine amidotransferase type-1 domain maps to 8–201 (TVLIIDFGSQ…VCKISGIKNN (194 aa)). Cys-85 serves as the catalytic Nucleophile. Residues His-175 and Glu-177 contribute to the active site. Residues 202 to 393 (WSMAAYRDQA…LGLPEEFIKR (192 aa)) form the GMPS ATP-PPase domain. 229-235 (SGGVDSS) serves as a coordination point for ATP.

Homodimer.

The enzyme catalyses XMP + L-glutamine + ATP + H2O = GMP + L-glutamate + AMP + diphosphate + 2 H(+). Its pathway is purine metabolism; GMP biosynthesis; GMP from XMP (L-Gln route): step 1/1. In terms of biological role, catalyzes the synthesis of GMP from XMP. This is GMP synthase [glutamine-hydrolyzing] from Bartonella bacilliformis (strain ATCC 35685 / KC583 / Herrer 020/F12,63).